We begin with the raw amino-acid sequence, 256 residues long: Homeobox protein Hox-D13a (256 aa).

A DNA-binding region (homeobox) is located at residues 191–250 (GRKKRVPYTKFQLKELEREYNTTKFITKENRRRIASSTNLSERQVTIWFQNRRVKDKKRP).

This sequence belongs to the Abd-B homeobox family.

Its subcellular location is the nucleus. Sequence-specific transcription factor which is part of a developmental regulatory system that provides cells with specific positional identities on the anterior-posterior axis. In Danio rerio (Zebrafish), this protein is Homeobox protein Hox-D13a (hoxd13a).